The chain runs to 885 residues: Leucine--tRNA ligase (885 aa).

The 'HIGH' region motif lies at 53–63; it reads PYPSGKLHMGH. The 'KMSKS' region motif lies at 631–635; sequence KMSKS. Residue Lys-634 coordinates ATP.

The protein belongs to the class-I aminoacyl-tRNA synthetase family.

It is found in the cytoplasm. The enzyme catalyses tRNA(Leu) + L-leucine + ATP = L-leucyl-tRNA(Leu) + AMP + diphosphate. The polypeptide is Leucine--tRNA ligase (Psychrobacter sp. (strain PRwf-1)).